The following is a 488-amino-acid chain: 3-octaprenyl-4-hydroxybenzoate carboxy-lyase (488 aa).

Residue N172 participates in Mn(2+) binding. Prenylated FMN is bound by residues 175–177, 189–191, and 194–195; these read IYR, RWL, and RG. Residue E238 coordinates Mn(2+). D287 acts as the Proton donor in catalysis.

It belongs to the UbiD family. As to quaternary structure, homohexamer. Prenylated FMN is required as a cofactor. It depends on Mn(2+) as a cofactor.

It localises to the cell membrane. The enzyme catalyses a 4-hydroxy-3-(all-trans-polyprenyl)benzoate + H(+) = a 2-(all-trans-polyprenyl)phenol + CO2. It functions in the pathway cofactor biosynthesis; ubiquinone biosynthesis. Catalyzes the decarboxylation of 3-octaprenyl-4-hydroxy benzoate to 2-octaprenylphenol, an intermediate step in ubiquinone biosynthesis. The chain is 3-octaprenyl-4-hydroxybenzoate carboxy-lyase from Legionella pneumophila (strain Paris).